Here is a 130-residue protein sequence, read N- to C-terminus: Small ribosomal subunit protein uS11 (130 aa).

The protein belongs to the universal ribosomal protein uS11 family. As to quaternary structure, part of the 30S ribosomal subunit. Interacts with proteins S7 and S18. Binds to IF-3.

Its function is as follows. Located on the platform of the 30S subunit, it bridges several disparate RNA helices of the 16S rRNA. Forms part of the Shine-Dalgarno cleft in the 70S ribosome. This is Small ribosomal subunit protein uS11 from Alteromonas mediterranea (strain DSM 17117 / CIP 110805 / LMG 28347 / Deep ecotype).